Reading from the N-terminus, the 267-residue chain is RWD domain-containing protein 3 (267 aa).

One can recognise an RWD domain in the interval 7 to 114 (EELSVLAAIF…LWIQQNLRHI (108 aa)). Interaction with UBE2I/UBC9 stretches follow at residues 13–15 (AAI) and 100–102 (VHE).

Isoform 1 and isoform 2 interact with UBE2I/UBC9. Isoform 1 shows a greater interaction with NFKBIA and HIF1A as compared to isoform 2. Isoform 2 interacts with NCOA2 and NR3C1. In terms of tissue distribution, isoform 1 and isoform 2 are expressed in glioma tumors (at protein level). Expressed in a wide number of tissues with highest expression in cerebellum, pituitary, heart, kidney, liver, stomach, pancreas, prostate and spleen. Low levels in thalamus, spinal cord, esophagus, thymus, lung and peripheral blood leukocytes. A higher level expression seen in pituitary tumors as compared to the pituitary gland.

It is found in the nucleus. Its subcellular location is the cytoplasm. Its function is as follows. Enhancer of SUMO conjugation. Via its interaction with UBE2I/UBC9, increases SUMO conjugation to proteins by promoting the binding of E1 and E2 enzymes, thioester linkage between SUMO and UBE2I/UBC9 and transfer of SUMO to specific target proteins which include HIF1A, PIAS, NFKBIA, NR3C1 and TOP1. Isoform 1 and isoform 2 positively regulate the NF-kappa-B signaling pathway by enhancing the sumoylation of NF-kappa-B inhibitor alpha (NFKBIA), promoting its stabilization which consequently leads to an increased inhibition of NF-kappa-B transcriptional activity. Isoform 1 and isoform 2 negatively regulate the hypoxia-inducible factor-1 alpha (HIF1A) signaling pathway by increasing the sumoylation of HIF1A, promoting its stabilization, transcriptional activity and the expression of its target gene VEGFA during hypoxia. Isoform 2 promotes the sumoylation and transcriptional activity of the glucocorticoid receptor NR3C1 and enhances the interaction of SUMO1 and NR3C1 with UBE2I/UBC9. Has no effect on ubiquitination. This is RWD domain-containing protein 3 (RWDD3) from Homo sapiens (Human).